The primary structure comprises 212 residues: Protein G1-like7 (212 aa).

The segment covering 1–22 (MDPSGPGPSSAAAGGAPAVAAA) has biased composition (low complexity). 2 disordered regions span residues 1–34 (MDPSGPGPSSAAAGGAPAVAAAPQPPAQLSRYES) and 148–212 (KARG…PSAS). The ALOG domain occupies 31 to 158 (RYESQKRRDW…ARGIPYEKKK (128 aa)). A Nuclear localization signal motif is present at residues 156–160 (KKKRK). Residues 173 to 182 (SGSSSAAAAA) show a composition bias toward low complexity. The segment covering 183–194 (AGGGDTGSGGGA) has biased composition (gly residues).

It belongs to the plant homeotic and developmental regulators ALOG protein family.

It localises to the nucleus. Functionally, probable transcription regulator that acts as a developmental regulator by promoting cell growth in response to light. The polypeptide is Protein G1-like7 (Oryza sativa subsp. indica (Rice)).